We begin with the raw amino-acid sequence, 195 residues long: Small ribosomal subunit protein uS4 (195 aa).

Positions 88–150 constitute an S4 RNA-binding domain; sequence RRLENVVYRL…SKNVELIKLA (63 aa).

This sequence belongs to the universal ribosomal protein uS4 family. In terms of assembly, part of the 30S ribosomal subunit. Contacts protein S5. The interaction surface between S4 and S5 is involved in control of translational fidelity.

In terms of biological role, one of the primary rRNA binding proteins, it binds directly to 16S rRNA where it nucleates assembly of the body of the 30S subunit. Its function is as follows. With S5 and S12 plays an important role in translational accuracy. This Fusobacterium nucleatum subsp. nucleatum (strain ATCC 25586 / DSM 15643 / BCRC 10681 / CIP 101130 / JCM 8532 / KCTC 2640 / LMG 13131 / VPI 4355) protein is Small ribosomal subunit protein uS4.